The sequence spans 1355 residues: Collagen alpha-2(I) chain (1355 aa).

A signal peptide spans 1-22 (MLSFVDLRSVLLLAVTLYLVTC). Residue Gln23 is modified to Pyrrolidone carboxylic acid. The propeptide at 23-71 (QEVRRGPRGDKGPPGEQGPPGIPGRDGEDGLPGLPGPPGVPGLGGNFAA) is N-terminal propeptide. The span at 26–35 (RRGPRGDKGP) shows a compositional bias: basic and acidic residues. Residues 26–1111 (RRGPRGDKGP…GDGGEYYRAD (1086 aa)) form a disordered region. Residue Gln72 is modified to Pyrrolidone carboxylic acid. Lys77 carries the post-translational modification Allysine. The span at 99-108 (PGSQGFQGLP) shows a compositional bias: low complexity. A compositionally biased stretch (basic and acidic residues) spans 132-146 (AGEDGHPGKSGRPGE). 5-hydroxylysine; alternate is present on Lys168. Lys168 carries an O-linked (Gal...) hydroxylysine; alternate glycan. The span at 218–267 (PAGSAGSRGSDGSSGPVGPAGPIGSAGAPGLPGAPGAKGELGPAGNNGPT) shows a compositional bias: low complexity. Pro residues predominate over residues 276 to 290 (PGPPGSLGPAGPPGN). Residues 291 to 303 (PGTNGVNGAKGTA) are compositionally biased toward low complexity. Gly residues predominate over residues 304-322 (GLPGVGGAPGLPGGRGIPG). A compositionally biased stretch (low complexity) spans 327 to 336 (AGPSGARGLA). 2 stretches are compositionally biased toward gly residues: residues 340–349 (GIAGGKGDTG) and 403–412 (GRAGGIGPAG). 2 stretches are compositionally biased toward low complexity: residues 413-426 (SRGS…RGPN) and 465-495 (EGRS…NGEP). Gly residues-rich tracts occupy residues 523-532 (GPAGLGGATG) and 586-595 (GESGGAGPHG). The span at 596–618 (PSGSRGPSGAPGPDGQKGEPGAA) shows a compositional bias: low complexity. Over residues 619-628 (GLNGGLGPSG) the composition is skewed to gly residues. Composition is skewed to low complexity over residues 659-675 (NPGR…AGAP), 687-701 (SGPA…PRGA), and 708-726 (AGPA…AGHT). The span at 728–738 (AKGDRGAKGPK) shows a compositional bias: basic and acidic residues. 2 stretches are compositionally biased toward low complexity: residues 741–767 (AGSP…STGA) and 776–788 (ATGF…RAGA). A compositionally biased stretch (basic and acidic residues) spans 804–813 (PGKDGSRGPR). Low complexity predominate over residues 852-869 (AGPSGVLGARGILGLPGT). Over residues 874-883 (GLPGGPGSNG) the composition is skewed to gly residues. Low complexity-rich tracts occupy residues 884 to 912 (EPGP…VGHS) and 947 to 966 (PSGL…AGKS). Residues 967–976 (GNRGEGGPSG) show a composition bias toward gly residues. Residues 996–1014 (RGDKGEAGERGARGLDGRK) are compositionally biased toward basic and acidic residues. A compositionally biased stretch (low complexity) spans 1019–1041 (LSGLPGPSGTPGETGPSGSVGPV). Pro residues predominate over residues 1080–1091 (AGPPGPPGPPGH). A compositionally biased stretch (gly residues) spans 1093–1105 (GPSGGGYDGGDGG). The propeptide at 1111–1355 (DQPERKPKDY…GFEIGPVCFK (245 aa)) is C-terminal propeptide. The Fibrillar collagen NC1 domain occupies 1120 to 1355 (YEVDATLKSL…GFEIGPVCFK (236 aa)). Intrachain disulfides connect Cys1150–Cys1182, Cys1190–Cys1353, and Cys1261–Cys1306. Ca(2+) is bound by residues Asp1168, Asn1170, Gln1171, Cys1173, and Asp1176. Asn1206 and Asn1256 each carry an N-linked (GlcNAc...) asparagine glycan.

It belongs to the fibrillar collagen family. Trimers of one alpha 2(I) and two alpha 1(I) chains. In terms of processing, prolines at the third position of the tripeptide repeating unit (G-X-Y) are hydroxylated in some or all of the chains. As to expression, forms the fibrils of tendon, ligaments and bones. In bones the fibrils are mineralized with calcium hydroxyapatite.

Its subcellular location is the secreted. The protein localises to the extracellular space. The protein resides in the extracellular matrix. Functionally, type I collagen is a member of group I collagen (fibrillar forming collagen). This Aquarana catesbeiana (American bullfrog) protein is Collagen alpha-2(I) chain (COL1A2).